The following is a 214-amino-acid chain: Phosphoenolpyruvate guanylyltransferase (214 aa).

Phosphoenolpyruvate contacts are provided by T148, G163, and S166.

Belongs to the CofC family.

It catalyses the reaction phosphoenolpyruvate + GTP + H(+) = enolpyruvoyl-2-diphospho-5'-guanosine + diphosphate. Its pathway is cofactor biosynthesis; coenzyme F420 biosynthesis. Guanylyltransferase that catalyzes the activation of phosphoenolpyruvate (PEP) as enolpyruvoyl-2-diphospho-5'-guanosine, via the condensation of PEP with GTP. It is involved in the biosynthesis of coenzyme F420, a hydride carrier cofactor. The chain is Phosphoenolpyruvate guanylyltransferase from Mycolicibacterium gilvum (strain PYR-GCK) (Mycobacterium gilvum (strain PYR-GCK)).